The primary structure comprises 385 residues: Serpin-Z10 (385 aa).

The tract at residues 333-357 is RCL; it reads GTEAAAVSVGVVSCTSFRRNPDFVA.

Belongs to the serpin family.

Probable serine protease inhibitor. The polypeptide is Serpin-Z10 (Arabidopsis thaliana (Mouse-ear cress)).